A 410-amino-acid chain; its full sequence is Multifunctional CCA protein (410 aa).

ATP contacts are provided by Gly-8 and Arg-11. CTP is bound by residues Gly-8 and Arg-11. Mg(2+) is bound by residues Glu-21 and Asp-23. 3 residues coordinate ATP: Arg-91, Arg-137, and Arg-140. Arg-91, Arg-137, and Arg-140 together coordinate CTP. Positions 228–329 constitute an HD domain; that stretch reads TGIHSLMTLR…VKLLEQVDAF (102 aa).

The protein belongs to the tRNA nucleotidyltransferase/poly(A) polymerase family. Bacterial CCA-adding enzyme type 1 subfamily. In terms of assembly, monomer. Can also form homodimers and oligomers. The cofactor is Mg(2+). Ni(2+) serves as cofactor.

It catalyses the reaction a tRNA precursor + 2 CTP + ATP = a tRNA with a 3' CCA end + 3 diphosphate. The enzyme catalyses a tRNA with a 3' CCA end + 2 CTP + ATP = a tRNA with a 3' CCACCA end + 3 diphosphate. Catalyzes the addition and repair of the essential 3'-terminal CCA sequence in tRNAs without using a nucleic acid template. Adds these three nucleotides in the order of C, C, and A to the tRNA nucleotide-73, using CTP and ATP as substrates and producing inorganic pyrophosphate. tRNA 3'-terminal CCA addition is required both for tRNA processing and repair. Also involved in tRNA surveillance by mediating tandem CCA addition to generate a CCACCA at the 3' terminus of unstable tRNAs. While stable tRNAs receive only 3'-terminal CCA, unstable tRNAs are marked with CCACCA and rapidly degraded. The chain is Multifunctional CCA protein from Legionella pneumophila subsp. pneumophila (strain Philadelphia 1 / ATCC 33152 / DSM 7513).